Consider the following 526-residue polypeptide: Peptide chain release factor 3 (526 aa).

In terms of domain architecture, tr-type G spans 9–277 (DRRRTFAIVS…TFVDHAPAPL (269 aa)). Residues 18-25 (SHPDAGKT), 86-90 (DTPGH), and 140-143 (NKLD) contribute to the GTP site.

It belongs to the TRAFAC class translation factor GTPase superfamily. Classic translation factor GTPase family. PrfC subfamily.

Its subcellular location is the cytoplasm. Increases the formation of ribosomal termination complexes and stimulates activities of RF-1 and RF-2. It binds guanine nucleotides and has strong preference for UGA stop codons. It may interact directly with the ribosome. The stimulation of RF-1 and RF-2 is significantly reduced by GTP and GDP, but not by GMP. This chain is Peptide chain release factor 3, found in Geobacter sulfurreducens (strain ATCC 51573 / DSM 12127 / PCA).